Reading from the N-terminus, the 163-residue chain is Putative 4-hydroxy-4-methyl-2-oxoglutarate aldolase (163 aa).

Residues 76–79 (GDMI) and arginine 98 each bind substrate. Aspartate 99 is a binding site for a divalent metal cation.

This sequence belongs to the class II aldolase/RraA-like family. In terms of assembly, homotrimer. Requires a divalent metal cation as cofactor.

It catalyses the reaction 4-hydroxy-4-methyl-2-oxoglutarate = 2 pyruvate. It carries out the reaction oxaloacetate + H(+) = pyruvate + CO2. Functionally, catalyzes the aldol cleavage of 4-hydroxy-4-methyl-2-oxoglutarate (HMG) into 2 molecules of pyruvate. Also contains a secondary oxaloacetate (OAA) decarboxylase activity due to the common pyruvate enolate transition state formed following C-C bond cleavage in the retro-aldol and decarboxylation reactions. In Pseudomonas fluorescens (strain Pf0-1), this protein is Putative 4-hydroxy-4-methyl-2-oxoglutarate aldolase.